The sequence spans 72 residues: Large ribosomal subunit protein bL31c (72 aa).

It belongs to the bacterial ribosomal protein bL31 family. Type A subfamily. In terms of assembly, part of the 50S ribosomal subunit.

The protein resides in the plastid. It localises to the chloroplast. Binds the 23S rRNA. This Phaeodactylum tricornutum (strain CCAP 1055/1) protein is Large ribosomal subunit protein bL31c (rpl31).